The following is a 425-amino-acid chain: Gamma-glutamyl phosphate reductase (425 aa).

The protein belongs to the gamma-glutamyl phosphate reductase family.

The protein resides in the cytoplasm. It catalyses the reaction L-glutamate 5-semialdehyde + phosphate + NADP(+) = L-glutamyl 5-phosphate + NADPH + H(+). Its pathway is amino-acid biosynthesis; L-proline biosynthesis; L-glutamate 5-semialdehyde from L-glutamate: step 2/2. Functionally, catalyzes the NADPH-dependent reduction of L-glutamate 5-phosphate into L-glutamate 5-semialdehyde and phosphate. The product spontaneously undergoes cyclization to form 1-pyrroline-5-carboxylate. This is Gamma-glutamyl phosphate reductase from Symbiobacterium thermophilum (strain DSM 24528 / JCM 14929 / IAM 14863 / T).